The chain runs to 156 residues: Ribonuclease H (156 aa).

The 143-residue stretch at 2–144 folds into the RNase H type-1 domain; it reads SQFDVTVFTD…CDVLARAQAS (143 aa). The Mg(2+) site is built by aspartate 11, glutamate 49, aspartate 71, and aspartate 136.

This sequence belongs to the RNase H family. Monomer. Requires Mg(2+) as cofactor.

It localises to the cytoplasm. It catalyses the reaction Endonucleolytic cleavage to 5'-phosphomonoester.. Its function is as follows. Endonuclease that specifically degrades the RNA of RNA-DNA hybrids. This Nitratidesulfovibrio vulgaris (strain ATCC 29579 / DSM 644 / CCUG 34227 / NCIMB 8303 / VKM B-1760 / Hildenborough) (Desulfovibrio vulgaris) protein is Ribonuclease H.